The sequence spans 449 residues: Heterogeneous nuclear ribonucleoprotein H (449 aa).

M1 is subject to N-acetylmethionine. The residue at position 2 (M2) is an N-acetylmethionine; in Heterogeneous nuclear ribonucleoprotein H, N-terminally processed. Residues 11-90 (FVVKVRGLPW…RYVEVFKSNN (80 aa)) enclose the RRM 1 domain. At S23 the chain carries Phosphoserine. Residue K35 forms a Glycyl lysine isopeptide (Lys-Gly) (interchain with G-Cter in SUMO2) linkage. 2 positions are modified to phosphoserine: S54 and S63. Residues K87 and K98 each participate in a glycyl lysine isopeptide (Lys-Gly) (interchain with G-Cter in SUMO2) cross-link. An RRM 2 domain is found at 111 to 188 (GFVRLRGLPF…RYIEIFKSSR (78 aa)). R233 is subject to Dimethylated arginine; alternate. Residue R233 is modified to Omega-N-methylarginine; alternate. The 1-1 repeat unit spans residues 234–249 (GAYGGGYGGYDDYNGY). The segment at 234–433 (GAYGGGYGGY…YGGQSSMSGY (200 aa)) is 2 X 16 AA Gly-rich approximate repeats. Position 246 is a phosphotyrosine (Y246). The region spanning 289–364 (HCVHMRGLPY…RYVELFLNST (76 aa)) is the RRM 3 domain. Position 310 is a phosphoserine (S310). 3 tandem repeats follow at residues 354 to 372 (HRYVELFLNSTAGASGGAY), 374 to 392 (HRYVELFLNSTAGASGGAY), and 418 to 433 (GGYGGGYGGQSSMSGY). The interval 354-392 (HRYVELFLNSTAGASGGAYEHRYVELFLNSTAGASGGAY) is 2 X 19 AA perfect repeats.

As to quaternary structure, part of a ternary complex containing FUBP2, PTBP1, PTBP2 and HNRNPH1. Identified in the spliceosome C complex. Interacts with IGF2BP1. Interacts with CUGBP1; the interaction is RNA-dependent. Interacts with MBNL1; the interaction in RNA-independent.

The protein localises to the nucleus. It is found in the nucleoplasm. In terms of biological role, this protein is a component of the heterogeneous nuclear ribonucleoprotein (hnRNP) complexes which provide the substrate for the processing events that pre-mRNAs undergo before becoming functional, translatable mRNAs in the cytoplasm. Mediates pre-mRNA alternative splicing regulation. Inhibits, together with CUGBP1, insulin receptor (IR) pre-mRNA exon 11 inclusion in myoblast. Binds to the IR RNA. Binds poly(RG). The polypeptide is Heterogeneous nuclear ribonucleoprotein H (Hnrnph1) (Mus musculus (Mouse)).